Consider the following 996-residue polypeptide: Cilia- and flagella-associated protein 251 (996 aa).

WD repeat units lie at residues 73-114, 118-164, 168-211, 219-258, 282-319, 399-438, 445-485, 494-533, 547-593, 615-658, and 719-759; these read GHCN…PKKT, PHPN…EPCL, EFDR…KGFN, PSLK…EKVD, KGSN…IAWF, SIVS…SVLS, TDKE…WQNS, QGKP…FDVN, IHHS…YSKQ, EQET…FKFC, and AHPD…LEQI. Positions 971–996 are disordered; it reads DLEGEERDDNIEDQYEDEENEEYDQD.

It is found in the cell projection. It localises to the cilium. As component of a spoke-associated complex, regulates ciliary mobility by mediating a stable and functional assembly of the radial spoke 3 (RS3). The polypeptide is Cilia- and flagella-associated protein 251 (Tetrahymena thermophila (strain SB210)).